The primary structure comprises 486 residues: 3-sulfolactaldehyde dehydrogenase (486 aa).

NADP(+) contacts are provided by residues 157–158, 181–184, and 234–235; these read WN, RPAS, and GS. The Proton acceptor role is filled by Glu-256. Residue Leu-257 participates in NADP(+) binding. Cys-290 (nucleophile) is an active-site residue. Glu-387 serves as a coordination point for NADP(+).

It belongs to the aldehyde dehydrogenase family.

It catalyses the reaction (2S)-3-sulfolactaldehyde + NADP(+) + H2O = (2S)-3-sulfolactate + NADPH + 2 H(+). The catalysed reaction is (2S)-3-sulfolactaldehyde + NAD(+) + H2O = (2S)-3-sulfolactate + NADH + 2 H(+). In terms of biological role, catalyzes the oxidation of (2S)-3-sulfolactaldehyde to (2S)-3-sulfolactate, using both NAD(+) and NADP(+) as electron acceptors. Is involved in a degradation pathway of sulfoquinovose (SQ) that allows P.putida SQ1 to use SQ as the sole carbon and energy source for growth. This Pseudomonas putida (Arthrobacter siderocapsulatus) protein is 3-sulfolactaldehyde dehydrogenase.